A 157-amino-acid chain; its full sequence is 2-C-methyl-D-erythritol 2,4-cyclodiphosphate synthase (157 aa).

Positions 8 and 10 each coordinate a divalent metal cation. Residues 8 to 10 and 34 to 35 each bind 4-CDP-2-C-methyl-D-erythritol 2-phosphate; these read DVH and HS. Residue histidine 42 coordinates a divalent metal cation. Residues 56–58, 61–65, 100–106, 132–135, phenylalanine 139, and arginine 142 contribute to the 4-CDP-2-C-methyl-D-erythritol 2-phosphate site; these read DIG, FPDTD, AQAPKML, and TTTE.

This sequence belongs to the IspF family. As to quaternary structure, homotrimer. Requires a divalent metal cation as cofactor.

It catalyses the reaction 4-CDP-2-C-methyl-D-erythritol 2-phosphate = 2-C-methyl-D-erythritol 2,4-cyclic diphosphate + CMP. It participates in isoprenoid biosynthesis; isopentenyl diphosphate biosynthesis via DXP pathway; isopentenyl diphosphate from 1-deoxy-D-xylulose 5-phosphate: step 4/6. Its function is as follows. Involved in the biosynthesis of isopentenyl diphosphate (IPP) and dimethylallyl diphosphate (DMAPP), two major building blocks of isoprenoid compounds. Catalyzes the conversion of 4-diphosphocytidyl-2-C-methyl-D-erythritol 2-phosphate (CDP-ME2P) to 2-C-methyl-D-erythritol 2,4-cyclodiphosphate (ME-CPP) with a corresponding release of cytidine 5-monophosphate (CMP). The polypeptide is 2-C-methyl-D-erythritol 2,4-cyclodiphosphate synthase (Erwinia tasmaniensis (strain DSM 17950 / CFBP 7177 / CIP 109463 / NCPPB 4357 / Et1/99)).